The following is a 724-amino-acid chain: Ribosomal RNA large subunit methyltransferase K/L (724 aa).

The THUMP domain occupies 42–153; it reads DAQRLVLWSR…KGRATLSVDL (112 aa).

This sequence belongs to the methyltransferase superfamily. RlmKL family.

The protein localises to the cytoplasm. The enzyme catalyses guanosine(2445) in 23S rRNA + S-adenosyl-L-methionine = N(2)-methylguanosine(2445) in 23S rRNA + S-adenosyl-L-homocysteine + H(+). It catalyses the reaction guanosine(2069) in 23S rRNA + S-adenosyl-L-methionine = N(2)-methylguanosine(2069) in 23S rRNA + S-adenosyl-L-homocysteine + H(+). In terms of biological role, specifically methylates the guanine in position 2445 (m2G2445) and the guanine in position 2069 (m7G2069) of 23S rRNA. The protein is Ribosomal RNA large subunit methyltransferase K/L of Xylella fastidiosa (strain M23).